The chain runs to 207 residues: Ribosomal RNA small subunit methyltransferase G (207 aa).

Residues Gly-77, Phe-82, 100-102 (ERS), and Arg-141 each bind S-adenosyl-L-methionine.

It belongs to the methyltransferase superfamily. RNA methyltransferase RsmG family.

It localises to the cytoplasm. Its function is as follows. Specifically methylates the N7 position of a guanine in 16S rRNA. This chain is Ribosomal RNA small subunit methyltransferase G, found in Borrelia turicatae (strain 91E135).